The primary structure comprises 920 residues: Anoctamin-4 (920 aa).

Residues 1–323 (METSSSGITN…LYFAWLGWYT (323 aa)) are Cytoplasmic-facing. Residues 38–64 (KDDDSLLHPGNLTSTSDDASRLEAGGE) form a disordered region. Residues 324–344 (GMLFPAAFIGLFVFLYGVITL) traverse the membrane as a helical segment. The Extracellular portion of the chain corresponds to 345–389 (DHCQVSKEVCQATDIIMCPVCDKYCPFMRLSDSCVYAKVTHLFDN). A helical membrane pass occupies residues 390–410 (GATVFFAVFMAVWATVFLEFW). Topologically, residues 411-470 (KRRRAVIAYDWDLIDWEEEEEEIRPQFEAKYSKKERMNPISGKPEPYQAFADKCSRLIVS) are cytoplasmic. The chain crosses the membrane as a helical span at residues 471–491 (ASGIFFMICVVIAAVFGIVIY). At 492 to 512 (RVVTVSTFAAFKWALIRNNSQ) the chain is on the extracellular side. N509 carries an N-linked (GlcNAc...) asparagine glycan. Residues 513–533 (VATTGTAVCINFCIIMLLNVL) traverse the membrane as a helical segment. Residues 534–560 (YEKVALLLTNLEQPRTESEWENSFTLK) are Cytoplasmic-facing. A helical membrane pass occupies residues 561–581 (MFLFQFVNLNSSTFYIAFFLG). Over 582 to 680 (RFTGHPGAYL…AYGLFDEYLE (99 aa)) the chain is Extracellular. The helical transmembrane segment at 681-701 (MILQFGFTTIFVAAFPLAPLL) threads the bilayer. Residues 702-733 (ALLNNIIEIRLDAYKFVTQWRRPLASRAKDIG) are Cytoplasmic-facing. Residues 734–754 (IWYGILEGIGILSVITNAFVI) traverse the membrane as a helical segment. Over 755-850 (AITSDFIPRL…QFWHVLAARL (96 aa)) the chain is Extracellular. N-linked (GlcNAc...) asparagine glycans are attached at residues N789 and N802. A helical transmembrane segment spans residues 851 to 871 (AFIIVFEHLVFCIKHLISYLI). Residues 872-920 (PDLPKDLRDRMRREKYLIQEMMYEAELERLQKERKERKKNGKAHHNEWP) are Cytoplasmic-facing.

Belongs to the anoctamin family.

Its subcellular location is the cell membrane. It catalyses the reaction a 1,2-diacyl-sn-glycero-3-phospho-L-serine(in) = a 1,2-diacyl-sn-glycero-3-phospho-L-serine(out). It carries out the reaction a beta-D-galactosyl-(1&lt;-&gt;1')-N-acylsphing-4-enine(out) = a beta-D-galactosyl-(1&lt;-&gt;1')-N-acylsphing-4-enine(in). The enzyme catalyses a 1,2-diacyl-sn-glycero-3-phosphocholine(in) = a 1,2-diacyl-sn-glycero-3-phosphocholine(out). Functionally, has calcium-dependent phospholipid scramblase activity; scrambles phosphatidylserine, phosphatidylcholine and galactosylceramide. Does not exhibit calcium-activated chloride channel (CaCC) activity. This is Anoctamin-4 from Bos taurus (Bovine).